The primary structure comprises 679 residues: UvrABC system protein C (679 aa).

The 79-residue stretch at Asn-65–Val-143 folds into the GIY-YIG domain. One can recognise a UVR domain in the interval Gln-253–Val-288.

It belongs to the UvrC family. In terms of assembly, interacts with UvrB in an incision complex.

It localises to the cytoplasm. Its function is as follows. The UvrABC repair system catalyzes the recognition and processing of DNA lesions. UvrC both incises the 5' and 3' sides of the lesion. The N-terminal half is responsible for the 3' incision and the C-terminal half is responsible for the 5' incision. The sequence is that of UvrABC system protein C from Rhizobium etli (strain ATCC 51251 / DSM 11541 / JCM 21823 / NBRC 15573 / CFN 42).